A 709-amino-acid polypeptide reads, in one-letter code: Caprin-1 (709 aa).

Low complexity-rich tracts occupy residues 1–15 (MPSATSHSGSGSKSS) and 22–43 (GSSGSEAAAGAGAAAPASQHPA). The segment at 1-50 (MPSATSHSGSGSKSSGPPPPSGSSGSEAAAGAGAAAPASQHPATGTGAVQ) is disordered. Residue Pro2 is modified to N-acetylproline. Residue Pro2 is modified to N-acetylalanine. Residue Ser10 is modified to Phosphoserine. The stretch at 60-94 (VIDKKLRNLEKKKGKLDDYQERMNKGERLNQDQLD) forms a coiled coil. Residue Ser115 is modified to Phosphoserine. Positions 125-153 (KTIKKTARREQLMREEAEQKRLKTVLELQ) form a coiled coil. Residue Arg165 is modified to Omega-N-methylarginine. The segment at 260–291 (EEAASAPAVEDQVPEAEPEPAEEYTEQSEVES) is disordered. A compositionally biased stretch (acidic residues) spans 271–291 (QVPEAEPEPAEEYTEQSEVES). Residues Ser335 and Ser343 each carry the phosphoserine modification. The G3BP1-binding stretch occupies residues 360-381 (QDLMAQMQGPYNFIQDSMLDFE). Disordered stretches follow at residues 417 to 446 (LAQPNQVPVQPEATQVPLVSSTSEGYTASQ), 475 to 499 (TDQTTASSSLPAASQPQVFQAGTSK), and 524 to 709 (APVP…QQVN). The segment covering 433 to 446 (PLVSSTSEGYTASQ) has biased composition (polar residues). 2 stretches are compositionally biased toward low complexity: residues 477–491 (QTTASSSLPAASQPQ) and 537–570 (QQNQYQASYNQSFSSQPHQVEQTELQQEQLQTVV). Polar residues predominate over residues 577-605 (PDQSHQVTGNHQQPPQQNTGFPRSNQPYY). Tyr625 bears the Phosphotyrosine; by EPHA4 mark. Omega-N-methylarginine is present on residues Arg626 and Arg633. Phosphotyrosine; by EPHA4 is present on residues Tyr636 and Tyr639. Arg640 is modified (omega-N-methylarginine). Positions 642–657 (SFSNTPNSGYTQSQFS) are enriched in polar residues. O-linked (GlcNAc) serine glycosylation is found at Ser644 and Ser649. Residues Tyr651, Tyr662, Tyr665, and Tyr670 each carry the phosphotyrosine; by EPHA4 modification. Low complexity-rich tracts occupy residues 676-686 (RGSGQSGPRGA) and 697-709 (NRGMPQMNTQQVN). Position 698 is an asymmetric dimethylarginine; alternate (Arg698). Arg698 bears the Omega-N-methylarginine; alternate mark.

This sequence belongs to the caprin family. As to quaternary structure, may form homomultimers. Interacts with G3BP1; interaction is direct and promotes stress granule formation. Interacts with G3BP2; interaction is direct and promotes stress granule formation. Interacts with PQBP1. Interacts with DDX3X. Interacts (when phosphorylated by EPHA4) with FMR1; interaction with FMR1 promotes formation of a membraneless compartment. In terms of assembly, (Microbial infection) Interacts with Zika virus capsid protein C; this interaction is probably linked to the inhibition of stress granules formation by the virus. (Microbial infection) Interacts with rotavirus A non-structural protein 5; this interaction probably plays a role in the sequestration of CAPRIN1 in viral factories. As to quaternary structure, (Microbial infection) Interacts with Japanese encephalitis virus capsid protein C; this interaction is involved in the suppression of the integrated stress response by the virus. Post-translationally, tyrosine phosphorylation by EPHA4 promotes interaction with FMR1 and liquid-liquid phase separation (LLPS) for the formation of a membraneless compartment that concentrates mRNAs with associated regulatory factors. O-glycosylated (O-GlcNAcylated), in a cell cycle-dependent manner. O-glycosylation by OGT inhibit ability to undergo liquid-liquid phase separation (LLPS). In terms of tissue distribution, ubiquitous.

It is found in the cytoplasm. It localises to the cytoplasmic ribonucleoprotein granule. The protein resides in the cytosol. Its subcellular location is the cell projection. The protein localises to the dendrite. It is found in the lamellipodium. Its activity is regulated as follows. Ability to mediate liquid-liquid phase separation is regulated by ATP: moderate concentrations of ATP enhance phase separation, whereas high concentrations of ATP lead to inhibition of phase separation. In terms of biological role, mRNA-binding protein that acts as a regulator of mRNAs transport, translation and/or stability, and which is involved in neurogenesis, synaptic plasticity in neurons and cell proliferation and migration in multiple cell types. Plays an essential role in cytoplasmic stress granule formation. Acts as an mRNA regulator by mediating formation of some phase-separated membraneless compartment: undergoes liquid-liquid phase separation upon binding to target mRNAs, leading to assemble mRNAs into cytoplasmic ribonucleoprotein granules that concentrate mRNAs with associated regulatory factors. Undergoes liquid-liquid phase separation following phosphorylation and interaction with FMR1, promoting formation of cytoplasmic ribonucleoprotein granules that concentrate mRNAs with factors that inhibit translation and mediate deadenylation of target mRNAs. In these cytoplasmic ribonucleoprotein granules, CAPRIN1 mediates recruitment of CNOT7 deadenylase, leading to mRNA deadenylation and degradation. Binds directly and selectively to MYC and CCND2 mRNAs. In neuronal cells, directly binds to several mRNAs associated with RNA granules, including BDNF, CAMK2A, CREB1, MAP2, NTRK2 mRNAs, as well as to GRIN1 and KPNB1 mRNAs, but not to rRNAs. The polypeptide is Caprin-1 (Homo sapiens (Human)).